A 36-amino-acid chain; its full sequence is Pancreatic polypeptide (36 aa).

At Phe36 the chain carries Phenylalanine amide.

This sequence belongs to the NPY family.

It localises to the secreted. Functionally, hormone secreted by pancreatic cells that acts as a regulator of pancreatic and gastrointestinal functions. The chain is Pancreatic polypeptide (ppy) from Aquarana catesbeiana (American bullfrog).